A 70-amino-acid chain; its full sequence is ATP synthase subunit c (70 aa).

2 consecutive transmembrane segments (helical) span residues 4-24 and 49-69; these read IAAA…NGLI and GIAL…LAFF.

It belongs to the ATPase C chain family. As to quaternary structure, F-type ATPases have 2 components, F(1) - the catalytic core - and F(0) - the membrane proton channel. F(1) has five subunits: alpha(3), beta(3), gamma(1), delta(1), epsilon(1). F(0) has three main subunits: a(1), b(2) and c(10-14). The alpha and beta chains form an alternating ring which encloses part of the gamma chain. F(1) is attached to F(0) by a central stalk formed by the gamma and epsilon chains, while a peripheral stalk is formed by the delta and b chains. The F(1)F(0) complex interacts with SpoIIIJ and YqjG; YqgA is found in the same complex.

It localises to the cell membrane. Functionally, f(1)F(0) ATP synthase produces ATP from ADP in the presence of a proton or sodium gradient. F-type ATPases consist of two structural domains, F(1) containing the extramembraneous catalytic core and F(0) containing the membrane proton channel, linked together by a central stalk and a peripheral stalk. During catalysis, ATP synthesis in the catalytic domain of F(1) is coupled via a rotary mechanism of the central stalk subunits to proton translocation. In terms of biological role, key component of the F(0) channel; it plays a direct role in translocation across the membrane. A homomeric c-ring of between 10-14 subunits forms the central stalk rotor element with the F(1) delta and epsilon subunits. This is ATP synthase subunit c from Bacillus subtilis (strain 168).